The following is an 850-amino-acid chain: Elongation factor 2 (850 aa).

The tr-type G domain occupies 17–351 (KNIRNISVIA…QIALKLPSPL (335 aa)). Residues 26 to 33 (AHVDHGKS), 159 to 162 (NKLD), and 213 to 215 (SGL) each bind GTP. At H707 the chain carries Diphthamide.

It belongs to the TRAFAC class translation factor GTPase superfamily. Classic translation factor GTPase family. EF-G/EF-2 subfamily.

The protein localises to the cytoplasm. The enzyme catalyses GTP + H2O = GDP + phosphate + H(+). The protein operates within protein biosynthesis; polypeptide chain elongation. Its function is as follows. Catalyzes the GTP-dependent ribosomal translocation step during translation elongation. During this step, the ribosome changes from the pre-translocational (PRE) to the post-translocational (POST) state as the newly formed A-site-bound peptidyl-tRNA and P-site-bound deacylated tRNA move to the P and E sites, respectively. Catalyzes the coordinated movement of the two tRNA molecules, the mRNA and conformational changes in the ribosome. The protein is Elongation factor 2 (EFT1) of Encephalitozoon cuniculi (strain GB-M1) (Microsporidian parasite).